Here is a 360-residue protein sequence, read N- to C-terminus: Phenylalanine--tRNA ligase alpha subunit (360 aa).

E260 contributes to the Mg(2+) binding site.

The protein belongs to the class-II aminoacyl-tRNA synthetase family. Phe-tRNA synthetase alpha subunit type 1 subfamily. As to quaternary structure, tetramer of two alpha and two beta subunits. Mg(2+) serves as cofactor.

It localises to the cytoplasm. It catalyses the reaction tRNA(Phe) + L-phenylalanine + ATP = L-phenylalanyl-tRNA(Phe) + AMP + diphosphate + H(+). This is Phenylalanine--tRNA ligase alpha subunit from Bartonella tribocorum (strain CIP 105476 / IBS 506).